A 782-amino-acid chain; its full sequence is Small RNA degrading nuclease 3 (782 aa).

Positions 145-296 constitute an Exonuclease domain; sequence MLSIDCEMVT…HDAAAAMKLV (152 aa). The RRM 1 domain occupies 331–410; it reads AQLFLHKIPH…KKAVLKLSSG (80 aa). Residues 426-464 are disordered; that stretch reads PCEISTSERARAEENNVSSKRQKTEDETEETKEATVNQR. Residues 469–549 enclose the RRM 2 domain; the sequence is TKLFLHKIPH…KMVVFKLSSG (81 aa). The interval 563–605 is disordered; it reads DSPGEISTTKRARTEESNMSSKRQKTEDESEETKEANAKQREA. Residues 577 to 605 are a coiled coil; sequence EESNMSSKRQKTEDESEETKEANAKQREA. Over residues 595-605 the composition is skewed to basic and acidic residues; that stretch reads TKEANAKQREA. The RRM 3 domain maps to 608–688; the sequence is TKLLLHKIPL…KMVAFKLSSG (81 aa). Positions 709 to 779 form a coiled coil; sequence ANANHCEDDH…KMKLEKKQSK (71 aa).

This sequence belongs to the REXO1/REXO3 family. As to quaternary structure, associated with the Mediator complex.

The protein localises to the nucleus. In terms of biological role, 3'-5' exonuclease degrading single-stranded small RNAs. In Arabidopsis thaliana (Mouse-ear cress), this protein is Small RNA degrading nuclease 3 (SDN3).